Consider the following 140-residue polypeptide: Cytochrome c oxidase subunit 6, mitochondrial (140 aa).

This sequence belongs to the cytochrome c oxidase subunit 5A family. Component of the cytochrome c oxidase (complex IV, CIV), a multisubunit enzyme composed of a catalytic core of 3 subunits and several supernumerary subunits. The complex exists as a monomer or a dimer and forms supercomplexes (SCs) in the inner mitochondrial membrane with ubiquinol-cytochrome c oxidoreductase (cytochrome b-c1 complex, complex III, CIII).

The protein resides in the mitochondrion inner membrane. Its pathway is energy metabolism; oxidative phosphorylation. Its function is as follows. Component of the cytochrome c oxidase, the last enzyme in the mitochondrial electron transport chain which drives oxidative phosphorylation. The respiratory chain contains 3 multisubunit complexes succinate dehydrogenase (complex II, CII), ubiquinol-cytochrome c oxidoreductase (cytochrome b-c1 complex, complex III, CIII) and cytochrome c oxidase (complex IV, CIV), that cooperate to transfer electrons derived from NADH and succinate to molecular oxygen, creating an electrochemical gradient over the inner membrane that drives transmembrane transport and the ATP synthase. Cytochrome c oxidase is the component of the respiratory chain that catalyzes the reduction of oxygen to water. Electrons originating from reduced cytochrome c in the intermembrane space (IMS) are transferred via the dinuclear copper A center (CU(A)) of subunit 2 and heme A of subunit 1 to the active site in subunit 1, a binuclear center (BNC) formed by heme A3 and copper B (CU(B)). The BNC reduces molecular oxygen to 2 water molecules using 4 electrons from cytochrome c in the IMS and 4 protons from the mitochondrial matrix. In Schizosaccharomyces pombe (strain 972 / ATCC 24843) (Fission yeast), this protein is Cytochrome c oxidase subunit 6, mitochondrial (cox6).